The sequence spans 72 residues: Small, acid-soluble spore protein 1 (72 aa).

Belongs to the alpha/beta-type SASP family.

In terms of biological role, SASP are bound to spore DNA. They are double-stranded DNA-binding proteins that cause DNA to change to an a-like conformation. They protect the DNA backbone from chemical and enzymatic cleavage and are thus involved in dormant spore's high resistance to UV light. This is Small, acid-soluble spore protein 1 (Sh-1) from Halobacillus halophilus (strain ATCC 35676 / DSM 2266 / JCM 20832 / KCTC 3685 / LMG 17431 / NBRC 102448 / NCIMB 2269) (Sporosarcina halophila).